A 61-amino-acid polypeptide reads, in one-letter code: Large ribosomal subunit protein uL30 (61 aa).

The protein belongs to the universal ribosomal protein uL30 family. As to quaternary structure, part of the 50S ribosomal subunit.

The sequence is that of Large ribosomal subunit protein uL30 from Fervidobacterium nodosum (strain ATCC 35602 / DSM 5306 / Rt17-B1).